A 528-amino-acid polypeptide reads, in one-letter code: J domain-containing protein APJ1 (528 aa).

A J domain is found at 4-73 (NTSLYDSLNV…RALYDQYGTT (70 aa)). Residues 193–274 (GKTAKLGLNR…CQGLGFIKER (82 aa)) form a CR-type zinc finger. 4 CXXCXGXG motif repeats span residues 206 to 213 (CSVCDGHG), 218 to 225 (CTCKTCKG), 246 to 253 (CADCGGAG), and 262 to 269 (CQQCQGLG). The segment covering 485 to 499 (NERDSRKRNNRRFDE) has biased composition (basic and acidic residues). The segment at 485–528 (NERDSRKRNNRRFDESNINNNNETKRNKYSSPVSGFYDHDINGY) is disordered.

Its subcellular location is the cytoplasm. The protein localises to the nucleus. Functionally, putative chaperone involved in protein folding. Interferes with propagation of [PSI+] prion when overproduced. This Saccharomyces cerevisiae (strain ATCC 204508 / S288c) (Baker's yeast) protein is J domain-containing protein APJ1 (APJ1).